The chain runs to 163 residues: Large ribosomal subunit protein uL15 (163 aa).

Belongs to the universal ribosomal protein uL15 family. In terms of assembly, part of the 50S ribosomal subunit.

In terms of biological role, binds to the 23S rRNA. The sequence is that of Large ribosomal subunit protein uL15 from Orientia tsutsugamushi (strain Boryong) (Rickettsia tsutsugamushi).